Here is a 293-residue protein sequence, read N- to C-terminus: Protease HtpX (293 aa).

The next 2 membrane-spanning stretches (helical) occupy residues 4–24 and 34–54; these read IALFLLTNLAVMLVFGLVLSL and GLMIMAGLFGFGGAFVSLLMS. Position 139 (His139) interacts with Zn(2+). The active site involves Glu140. His143 serves as a coordination point for Zn(2+). The next 2 helical transmembrane spans lie at 158–178 and 193–213; these read VVNTFVIFISRLIAQIAAGFL and MVYFAVSMVLELVFGILASII. Glu222 lines the Zn(2+) pocket.

Belongs to the peptidase M48B family. The cofactor is Zn(2+).

Its subcellular location is the cell inner membrane. The sequence is that of Protease HtpX from Yersinia pseudotuberculosis serotype O:1b (strain IP 31758).